Consider the following 895-residue polypeptide: Alanine--tRNA ligase (895 aa).

Zn(2+) contacts are provided by H586, H590, C690, and H694.

This sequence belongs to the class-II aminoacyl-tRNA synthetase family. Requires Zn(2+) as cofactor.

Its subcellular location is the cytoplasm. The enzyme catalyses tRNA(Ala) + L-alanine + ATP = L-alanyl-tRNA(Ala) + AMP + diphosphate. Functionally, catalyzes the attachment of alanine to tRNA(Ala) in a two-step reaction: alanine is first activated by ATP to form Ala-AMP and then transferred to the acceptor end of tRNA(Ala). Also edits incorrectly charged Ser-tRNA(Ala) and Gly-tRNA(Ala) via its editing domain. The polypeptide is Alanine--tRNA ligase (Korarchaeum cryptofilum (strain OPF8)).